The sequence spans 64 residues: Phi-buthitoxin-Hj1a (64 aa).

The N-terminal stretch at Met-1 to Ala-18 is a signal peptide. 3 cysteine pairs are disulfide-bonded: Cys-29-Cys-43, Cys-36-Cys-49, and Cys-42-Cys-58.

This sequence belongs to the scorpion calcin-like family. As to expression, expressed by the venom gland.

It localises to the secreted. May increase intracellular calcium release through the activation of nuclear inositol 1,4,5-trisphosphate receptors (ITPR) of cardiomyocytes, thereby causing an increase in the contraction frequency of these cells. The sequence is that of Phi-buthitoxin-Hj1a from Hottentotta judaicus (Black scorpion).